Consider the following 90-residue polypeptide: uncharacterized protein (90 aa).

The signal sequence occupies residues 1-20 (MAYKMLQVVLCSTLLIGALG).

This is an uncharacterized protein from Homo sapiens (Human).